The following is a 118-amino-acid chain: Fluoride-specific ion channel FluC 2 (118 aa).

4 helical membrane passes run 1 to 21 (MIEALLVATGGFFGAITRFAI), 33 to 53 (FPLATFLINITGAFLLGYIIG), 55 to 75 (GVTTGWQLLLGTGFMGAFTTF), and 91 to 111 (ISTFLLYLSATYIIGILFAFL). Residues Gly-70 and Thr-73 each contribute to the Na(+) site.

It belongs to the fluoride channel Fluc/FEX (TC 1.A.43) family.

The protein localises to the cell membrane. The enzyme catalyses fluoride(in) = fluoride(out). Na(+) is not transported, but it plays an essential structural role and its presence is essential for fluoride channel function. Its function is as follows. Fluoride-specific ion channel. Important for reducing fluoride concentration in the cell, thus reducing its toxicity. In Bacillus cereus (strain ATCC 14579 / DSM 31 / CCUG 7414 / JCM 2152 / NBRC 15305 / NCIMB 9373 / NCTC 2599 / NRRL B-3711), this protein is Fluoride-specific ion channel FluC 2.